Reading from the N-terminus, the 319-residue chain is Cytochrome f (319 aa).

A signal peptide spans 1–35 (MFQQMQKISLKLLKTTFLFLFATFILVGLPSTSQA). 4 residues coordinate heme: Tyr36, Cys56, Cys59, and His60. The chain crosses the membrane as a helical span at residues 285-305 (IQGLIAFFISVIIAQTFLVLK).

The protein belongs to the cytochrome f family. As to quaternary structure, the 4 large subunits of the cytochrome b6-f complex are cytochrome b6, subunit IV (17 kDa polypeptide, petD), cytochrome f and the Rieske protein, while the 4 small subunits are PetG, PetL, PetM and PetN. The complex functions as a dimer. Requires heme as cofactor.

It localises to the plastid. Its subcellular location is the chloroplast thylakoid membrane. Its function is as follows. Component of the cytochrome b6-f complex, which mediates electron transfer between photosystem II (PSII) and photosystem I (PSI), cyclic electron flow around PSI, and state transitions. This Chlorokybus atmophyticus (Soil alga) protein is Cytochrome f.